Here is a 305-residue protein sequence, read N- to C-terminus: Ribosomal RNA small subunit methyltransferase H (305 aa).

S-adenosyl-L-methionine contacts are provided by residues 33-35, D51, F82, D96, and Q103; that span reads GGY.

The protein belongs to the methyltransferase superfamily. RsmH family.

Its subcellular location is the cytoplasm. It carries out the reaction cytidine(1402) in 16S rRNA + S-adenosyl-L-methionine = N(4)-methylcytidine(1402) in 16S rRNA + S-adenosyl-L-homocysteine + H(+). Its function is as follows. Specifically methylates the N4 position of cytidine in position 1402 (C1402) of 16S rRNA. The polypeptide is Ribosomal RNA small subunit methyltransferase H (Rickettsia bellii (strain OSU 85-389)).